A 343-amino-acid chain; its full sequence is MAEQLSPGKTTDQVCTFLFKKPGRKVAAGRRKRPICNQESGDSSSSSDEGNTVVRPEKKRAVHNPMIQKTRGSGKQKVAYGDLSSEEEEENKSESLGVVYKSTRSAKPVGPEDMGATAVYELDTEKERDAQAIFERSQKIQEELRGQEDDKIYRGINNYQKFMKPKDTSMGNASSGMVRKGPIRAPEHLRATVRWDYQPDICKDYKETGFCGFGDSCKFLHDRSDYKHGWQIERELDEGRYGVYEDENYEVGSDEEEIPFKCFICRQTFQNPVVTKCRHYFCESCALQHFRTTPRCYVCDQQTNGVFNPAKELIAKLEKHRAAEGGGASGFPEDPDEDPVPIT.

An N-acetylalanine modification is found at alanine 2. An important for interaction with SNRNP200/BRR2 region spans residues 2–60 (AEQLSPGKTTDQVCTFLFKKPGRKVAAGRRKRPICNQESGDSSSSSDEGNTVVRPEKKR). Serine 6 carries the phosphoserine modification. The span at 23 to 34 (GRKVAAGRRKRP) shows a compositional bias: basic residues. Residues 23–95 (GRKVAAGRRK…EEEEENKSES (73 aa)) are disordered. Over residues 39-50 (ESGDSSSSSDEG) the composition is skewed to low complexity. Residues 50-61 (GNTVVRPEKKRA) form an important for interaction with CXCR4 region. Serine 84 and serine 85 each carry phosphoserine. A C3H1-type zinc finger spans residues 196-224 (DYQPDICKDYKETGFCGFGDSCKFLHDRS). Position 253 is a phosphoserine (serine 253). The RING-type zinc-finger motif lies at 262-300 (CFICRQTFQNPVVTKCRHYFCESCALQHFRTTPRCYVCD). The segment at 323–343 (AEGGGASGFPEDPDEDPVPIT) is disordered. Acidic residues predominate over residues 333–343 (EDPDEDPVPIT).

As to quaternary structure, component of pre-catalytic and catalytic spliceosome complexes. Interacts (via N-terminus) with the spliceosome subunit SNRNP200/BRR2. Component of the minor spliceosome. Within this complex, interacts with SCNM1 and CRIPT.

It localises to the nucleus. The protein localises to the nucleus speckle. The catalysed reaction is S-ubiquitinyl-[E2 ubiquitin-conjugating enzyme]-L-cysteine + [acceptor protein]-L-lysine = [E2 ubiquitin-conjugating enzyme]-L-cysteine + N(6)-ubiquitinyl-[acceptor protein]-L-lysine.. It participates in protein modification; protein ubiquitination. In terms of biological role, required for pre-mRNA splicing as component of the spliceosome. As a component of the minor spliceosome, involved in the splicing of U12-type introns in pre-mRNAs. E3 ubiquitin-protein ligase that catalyzes the transfer of ubiquitin onto target proteins. Catalyzes polyubiquitination of SNRNP200/BRR2 with non-canonical 'Lys-63'-linked polyubiquitin chains. Plays a role in DNA repair via its role in the synthesis of 'Lys-63'-linked polyubiquitin chains that recruit ALKBH3 and the ASCC complex to sites of DNA damage by alkylating agents. Ubiquitinates CXCR4, leading to its degradation, and thereby contributes to the termination of CXCR4 signaling. The sequence is that of E3 ubiquitin-protein ligase RNF113A (RNF113A) from Bos taurus (Bovine).